We begin with the raw amino-acid sequence, 535 residues long: Methylmalonate-semialdehyde/malonate-semialdehyde dehydrogenase [acylating], mitochondrial (535 aa).

The N-terminal 33 residues, 1–33, are a transit peptide targeting the mitochondrion; that stretch reads MAALLAAAAVRARILQVSSKVKSSPTWYSASSF. N6-acetyllysine; alternate occurs at positions 47, 52, 55, and 76. 4 positions are modified to N6-succinyllysine; alternate: Lys-47, Lys-52, Lys-55, and Lys-76. Lys-87 bears the N6-acetyllysine mark. 2 positions are modified to N6-acetyllysine; alternate: Lys-117 and Lys-129. Lys-117 and Lys-129 each carry N6-succinyllysine; alternate. Ala-183, Phe-185, Lys-209, Glu-212, Arg-213, and Ser-262 together coordinate NAD(+). At Ser-262 the chain carries Phosphoserine. The residue at position 298 (Lys-298) is an N6-acetyllysine. The active-site Nucleophile is Cys-317. Residues Lys-330 and Lys-331 each carry the N6-acetyllysine modification. 2 positions are modified to N6-acetyllysine; alternate: Lys-364 and Lys-376. N6-succinyllysine; alternate occurs at positions 364 and 376. Residue Ser-380 is modified to Phosphoserine. Position 391 is an N6-succinyllysine (Lys-391). NAD(+) is bound at residue Glu-417. Lys-500 carries the post-translational modification N6-acetyllysine. The residue at position 517 (Lys-517) is an N6-succinyllysine.

This sequence belongs to the aldehyde dehydrogenase family. As to quaternary structure, homotetramer.

The protein localises to the mitochondrion. It carries out the reaction 3-oxopropanoate + NAD(+) + CoA + H2O = hydrogencarbonate + acetyl-CoA + NADH + H(+). The catalysed reaction is 2-methyl-3-oxopropanoate + NAD(+) + CoA + H2O = propanoyl-CoA + hydrogencarbonate + NADH + H(+). It catalyses the reaction (R)-2-methyl-3-oxopropanoate + NAD(+) + CoA + H2O = propanoyl-CoA + hydrogencarbonate + NADH + H(+). The enzyme catalyses (S)-2-methyl-3-oxopropanoate + NAD(+) + CoA + H2O = propanoyl-CoA + hydrogencarbonate + NADH + H(+). Its function is as follows. Malonate and methylmalonate semialdehyde dehydrogenase involved in the catabolism of valine, thymine, and compounds catabolized by way of beta-alanine, including uracil and cytidine. The sequence is that of Methylmalonate-semialdehyde/malonate-semialdehyde dehydrogenase [acylating], mitochondrial from Homo sapiens (Human).